A 112-amino-acid polypeptide reads, in one-letter code: MTTLRKRLCLATLLSLTALAFTAPVSAQTSKLIIESGDSAQSRQNAAMDKEQWNDTRNLRQKVNKRAEKEWDKEDVAFDSRDKCQQSANVNAYWEANTLRCLDRRTGRTVAP.

Positions 1–27 (MTTLRKRLCLATLLSLTALAFTAPVSA) are cleaved as a signal peptide.

It belongs to the UPF0482 family.

This chain is UPF0482 protein Ent638_1930, found in Enterobacter sp. (strain 638).